A 57-amino-acid polypeptide reads, in one-letter code: Conotoxin Cal6.34 (57 aa).

Residues 1 to 22 (MKLTCVLIVAVLILTACQVIAA) form the signal peptide. Intrachain disulfides connect Cys26/Cys37, Cys29/Cys43, and Cys36/Cys54.

Belongs to the conotoxin O1 superfamily. In terms of tissue distribution, expressed by the venom duct.

It is found in the secreted. In terms of biological role, probable neurotoxin. This chain is Conotoxin Cal6.34, found in Californiconus californicus (California cone).